The chain runs to 181 residues: Transcription termination/antitermination protein NusG (181 aa).

In terms of domain architecture, KOW spans 130 to 161; sequence PGEMVRVNDGPFADFNGVVEEVDYEKSRLKVS.

This sequence belongs to the NusG family. As to quaternary structure, monomer. Interacts with the transcription termination factor Rho and with RNA polymerase.

Participates in transcription elongation, termination and antitermination. In the absence of Rho, increases the rate of transcription elongation by the RNA polymerase (RNAP), probably by partially suppressing pausing. In the presence of Rho, modulates most Rho-dependent termination events by interacting with the RNAP to render the complex more susceptible to the termination activity of Rho. May be required to overcome a kinetic limitation of Rho to function at certain terminators. Also involved in ribosomal RNA transcriptional antitermination. The chain is Transcription termination/antitermination protein NusG from Shigella flexneri.